We begin with the raw amino-acid sequence, 117 residues long: Anti-sigma F factor antagonist (117 aa).

The 111-residue stretch at 3–113 folds into the STAS domain; the sequence is LQIEMEHHRG…DNEVNALTEL (111 aa). S58 is modified (phosphoserine).

Belongs to the anti-sigma-factor antagonist family. Post-translationally, phosphorylated by SpoIIAB on a serine residue.

In the phosphorylated form it could act as an anti-anti-sigma factor that counteracts SpoIIAB and thus releases sigma f from inhibition. This chain is Anti-sigma F factor antagonist (spoIIAA), found in Paenibacillus polymyxa (Bacillus polymyxa).